The chain runs to 141 residues: MRQRTIVCPIIQNNGAYLLCKMASDRGVFPGQWALSGGGMEPGETMEEALRREIREELGERLEITAVKPWAFRDDIRVKTYADGTTEQIYMIYLIFDCLSANRDVTFNEEFQDIAWVTRESLNTLDLNEATRLTFTQKGLL.

In terms of domain architecture, Nudix hydrolase spans 1–141 (MRQRTIVCPI…RLTFTQKGLL (141 aa)). The Nudix box signature appears at 38-59 (GGMEPGETMEEALRREIREELG).

It belongs to the Nudix hydrolase family. NudI subfamily. In terms of assembly, monomer. The cofactor is Mg(2+).

It catalyses the reaction a ribonucleoside 5'-triphosphate + H2O = a ribonucleoside 5'-phosphate + diphosphate + H(+). It carries out the reaction a 2'-deoxyribonucleoside 5'-triphosphate + H2O = a 2'-deoxyribonucleoside 5'-phosphate + diphosphate + H(+). The catalysed reaction is dUTP + H2O = dUMP + diphosphate + H(+). The enzyme catalyses dTTP + H2O = dTMP + diphosphate + H(+). It catalyses the reaction dCTP + H2O = dCMP + diphosphate + H(+). Functionally, catalyzes the hydrolysis of nucleoside triphosphates, with a preference for pyrimidine deoxynucleoside triphosphates (dUTP, dTTP and dCTP). The protein is Nucleoside triphosphatase NudI of Enterobacter sp. (strain 638).